The primary structure comprises 211 residues: Adenylate kinase (211 aa).

Position 10–15 (10–15) interacts with ATP; the sequence is GSGKGT. The interval 30 to 59 is NMP; sequence STGDLFRENILNSTALGQEIKKIVERGELV. Residues threonine 31, arginine 36, 57 to 59, 85 to 88, and glutamine 92 each bind AMP; these read ELV and GFPR. The LID stretch occupies residues 121-158; sequence GRRICKSCNNIFNIYTLTTKKNGICDVCGGDLYQREDD. Arginine 122 is a binding site for ATP. Zn(2+) contacts are provided by cysteine 125 and cysteine 128. 131–132 contacts ATP; sequence IF. Residues cysteine 145 and cysteine 148 each contribute to the Zn(2+) site. AMP is bound by residues arginine 155 and arginine 166. Valine 194 provides a ligand contact to ATP.

The protein belongs to the adenylate kinase family. Monomer.

Its subcellular location is the cytoplasm. The catalysed reaction is AMP + ATP = 2 ADP. Its pathway is purine metabolism; AMP biosynthesis via salvage pathway; AMP from ADP: step 1/1. Its function is as follows. Catalyzes the reversible transfer of the terminal phosphate group between ATP and AMP. Plays an important role in cellular energy homeostasis and in adenine nucleotide metabolism. The sequence is that of Adenylate kinase from Borreliella burgdorferi (strain ATCC 35210 / DSM 4680 / CIP 102532 / B31) (Borrelia burgdorferi).